The chain runs to 466 residues: Ribulose bisphosphate carboxylase large chain (466 aa).

N6,N6,N6-trimethyllysine is present on Lys-5. Asn-114 and Thr-164 together coordinate substrate. The active-site Proton acceptor is Lys-166. Lys-168 provides a ligand contact to substrate. The Mg(2+) site is built by Lys-192, Asp-194, and Glu-195. Lys-192 is modified (N6-carboxylysine). His-285 functions as the Proton acceptor in the catalytic mechanism. Residues Arg-286, His-318, and Ser-370 each contribute to the substrate site.

This sequence belongs to the RuBisCO large chain family. Type I subfamily. In terms of assembly, heterohexadecamer of 8 large chains and 8 small chains; disulfide-linked. The disulfide link is formed within the large subunit homodimers. The cofactor is Mg(2+). Post-translationally, the disulfide bond which can form in the large chain dimeric partners within the hexadecamer appears to be associated with oxidative stress and protein turnover.

The protein resides in the plastid. It is found in the chloroplast. The enzyme catalyses 2 (2R)-3-phosphoglycerate + 2 H(+) = D-ribulose 1,5-bisphosphate + CO2 + H2O. The catalysed reaction is D-ribulose 1,5-bisphosphate + O2 = 2-phosphoglycolate + (2R)-3-phosphoglycerate + 2 H(+). Its function is as follows. RuBisCO catalyzes two reactions: the carboxylation of D-ribulose 1,5-bisphosphate, the primary event in carbon dioxide fixation, as well as the oxidative fragmentation of the pentose substrate in the photorespiration process. Both reactions occur simultaneously and in competition at the same active site. The protein is Ribulose bisphosphate carboxylase large chain of Gonopterodendron arboreum (Maracaibo lignum-vitae).